The primary structure comprises 436 residues: MGKLRVVHYINQFFAGIGGEEKADIAPFVAEELPPISQNLDKLLGEDAEVVATVVCGDSFFGENLETAQATVLEMVKGASPDLFIAGPAFNAGRYGVAAGAITKAVQDTLGIPAVTGMYIENPGADMYKKSVYVMSTADSAAGMRKSLPALAKFALKYAKGEEIGSPAEEGYIERGIRVNGFKEDRGAKRAVAMLVKKLKGEEFVTEYPMPVFDNVVPGRAIVNMSKAKIAIVTSGGIVPKGNPDRIESSSASKYGKYDIDGVDDLTSEGWETAHGGHDPVYANEDADRVIPVDVLRDMEKEGVIGELHRYFYSTTGNGTAVLSSKQFAKEFTQELMAAGVDAVILTSTUGTCTRCGATMVKEIERSGIPVVHICTVTPIALTVGANRIVPAIAIPHPLGDPALSPAEEKALRRKIVEKSLKALETEIEEQTVFED.

U350 is an active-site residue. Position 350 (U350) is a non-standard amino acid, selenocysteine.

It belongs to the GrdB/GrdF/GrdH family. In terms of assembly, heterohexamer of two alpha, two beta and two gamma subunits. Component of the glycine reductase complex, together with components A and C. PB is substrate specific.

The enzyme catalyses acetyl phosphate + [thioredoxin]-disulfide + NH4(+) + H2O = [thioredoxin]-dithiol + glycine + phosphate + H(+). In the first step of glycine reductase, the substrate is bound to component PB via a Schiff base intermediate. Then the PB-activated substrate is nucleophilically attacked by the selenol anion of component PA to transform it to a carboxymethylated selenoether and the respective amine. By action of component PC, acetyl phosphate is formed, leaving component PA in its oxidized state. Finally component PA becomes reduced by the thioredoxin system to start a new catalytic cycle of reductive deamination. The sequence is that of Glycine reductase complex component B subunit gamma (grdB) from Peptoclostridium litorale (Clostridium litorale).